Here is a 65-residue protein sequence, read N- to C-terminus: Large ribosomal subunit protein bL35 (65 aa).

The interval 1–65 (MPKIKTNRAA…GRLDRMLPYL (65 aa)) is disordered. A compositionally biased stretch (basic residues) spans 10-44 (AAKRFRKTASGKYKAGHANRSHILTKKATKRKRNL). The segment covering 50–65 (VRAEDAGRLDRMLPYL) has biased composition (basic and acidic residues).

Belongs to the bacterial ribosomal protein bL35 family.

The polypeptide is Large ribosomal subunit protein bL35 (Xylella fastidiosa (strain M23)).